We begin with the raw amino-acid sequence, 1750 residues long: Protein TIC 214 (1750 aa).

6 consecutive transmembrane segments (helical) span residues Lys-12–Ile-32, Phe-69–Leu-89, Ile-97–Ala-117, Leu-129–Leu-149, Phe-177–Ile-197, and Ile-216–Cys-236. Basic and acidic residues predominate over residues Arg-260–Ser-277. Disordered stretches follow at residues Arg-260–Pro-282, Ala-617–Ser-638, Ser-718–Glu-738, Arg-1205–Val-1225, and Glu-1419–Glu-1512. Low complexity predominate over residues Ala-617 to Asp-629. The span at Lys-727–Glu-738 shows a compositional bias: basic and acidic residues. The segment covering Thr-1420 to Glu-1512 has biased composition (basic and acidic residues).

This sequence belongs to the TIC214 family. Part of the Tic complex.

The protein localises to the plastid. The protein resides in the chloroplast inner membrane. In terms of biological role, involved in protein precursor import into chloroplasts. May be part of an intermediate translocation complex acting as a protein-conducting channel at the inner envelope. The protein is Protein TIC 214 of Cuscuta reflexa (Southern Asian dodder).